The chain runs to 338 residues: Bifunctional methylenetetrahydrofolate dehydrogenase/cyclohydrolase 2, mitochondrial (338 aa).

Residues 89–93 (YVRNK) and 136–138 (VQL) contribute to the substrate site. NAD(+) contacts are provided by residues 205 to 207 (GRS) and arginine 238. 314–318 (PGGVG) provides a ligand contact to substrate.

It belongs to the tetrahydrofolate dehydrogenase/cyclohydrolase family. Requires Mg(2+) as cofactor. Widely expressed.

It is found in the mitochondrion inner membrane. The enzyme catalyses (6R)-5,10-methylene-5,6,7,8-tetrahydrofolate + NAD(+) = (6R)-5,10-methenyltetrahydrofolate + NADH. It catalyses the reaction (6R)-5,10-methenyltetrahydrofolate + H2O = (6R)-10-formyltetrahydrofolate + H(+). The catalysed reaction is (6R)-5,10-methylene-5,6,7,8-tetrahydrofolate + NADP(+) = (6R)-5,10-methenyltetrahydrofolate + NADPH. It functions in the pathway one-carbon metabolism; tetrahydrofolate interconversion. Its function is as follows. Bifunctional mitochondrial folate-interconverting enzyme that has both NAD/NADP-dependent methylenetetrahydrofolate dehydrogenase and methenyltetrahydrofolate cyclohydrolase activities. In Mus musculus (Mouse), this protein is Bifunctional methylenetetrahydrofolate dehydrogenase/cyclohydrolase 2, mitochondrial.